An 80-amino-acid chain; its full sequence is UPF0154 protein MGAS10270_Spy0296 (80 aa).

The chain crosses the membrane as a helical span at residues 4 to 24; that stretch reads AIWILLLIVALGVGVFGGIFI.

This sequence belongs to the UPF0154 family.

It is found in the cell membrane. This chain is UPF0154 protein MGAS10270_Spy0296, found in Streptococcus pyogenes serotype M2 (strain MGAS10270).